The chain runs to 495 residues: Muscle LIM protein Mlp84B (495 aa).

The 52-residue stretch at 12–63 folds into the LIM zinc-binding 1 domain; sequence CPRCGKSVYAAEERLAGGYVFHKNCFKCGMCNKSLDSTNCTEHERELYCKTC. Positions 66 to 71 match the Nuclear localization signal motif; it reads RKFGPK. The LIM zinc-binding 2 domain maps to 120-172; it reads CPRCGGYVYAAEQMLARGRSWHKECFKCGTCKKGLDSILCCEAPDKNIYCKGC. The short motif at 175–180 is the Nuclear localization signal element; the sequence is KKFGPK. LIM zinc-binding domains follow at residues 222-274, 325-377, and 421-473; these read CPRC…CRTC and CPRC…CRAC.

As to expression, in the embryo, expression is restricted to the somatic, visceral, and pharyngeal muscles. Within the somatic musculature, expression is localized at the ends of muscles fibers at the point of attachment to the epidermis (at protein level). There is no expression in cardiac mesoderm or in fat body.

Its subcellular location is the cytoplasm. It is found in the nucleus. Its function is as follows. Plays a role in cell differentiation late in myogenesis. Transcription factor Mef2 is essential for expression. The chain is Muscle LIM protein Mlp84B from Drosophila melanogaster (Fruit fly).